Consider the following 516-residue polypeptide: Cytochrome P450 1A2 (516 aa).

The O-linked (GlcNAc) serine glycan is linked to Ser69. Position 226 (Phe226) interacts with substrate. Cys458 provides a ligand contact to heme.

Belongs to the cytochrome P450 family. In terms of assembly, interacts with PGRMC1; the interaction requires PGRMC1 homodimerization. It depends on heme as a cofactor.

The protein localises to the endoplasmic reticulum membrane. The protein resides in the microsome membrane. The catalysed reaction is an organic molecule + reduced [NADPH--hemoprotein reductase] + O2 = an alcohol + oxidized [NADPH--hemoprotein reductase] + H2O + H(+). It catalyses the reaction 17beta-estradiol + reduced [NADPH--hemoprotein reductase] + O2 = 2-hydroxy-17beta-estradiol + oxidized [NADPH--hemoprotein reductase] + H2O + H(+). It carries out the reaction 17beta-estradiol + reduced [NADPH--hemoprotein reductase] + O2 = 4-hydroxy-17beta-estradiol + oxidized [NADPH--hemoprotein reductase] + H2O + H(+). The enzyme catalyses estrone + reduced [NADPH--hemoprotein reductase] + O2 = 2-hydroxyestrone + oxidized [NADPH--hemoprotein reductase] + H2O + H(+). The catalysed reaction is estrone + reduced [NADPH--hemoprotein reductase] + O2 = 4-hydroxyestrone + oxidized [NADPH--hemoprotein reductase] + H2O + H(+). It catalyses the reaction cholesterol + reduced [NADPH--hemoprotein reductase] + O2 = 25-hydroxycholesterol + oxidized [NADPH--hemoprotein reductase] + H2O + H(+). It carries out the reaction all-trans-retinol + reduced [NADPH--hemoprotein reductase] + O2 = all-trans-retinal + oxidized [NADPH--hemoprotein reductase] + 2 H2O + H(+). The enzyme catalyses all-trans-retinal + reduced [NADPH--hemoprotein reductase] + O2 = all-trans-retinoate + oxidized [NADPH--hemoprotein reductase] + H2O + 2 H(+). The catalysed reaction is (5Z,8Z,11Z,14Z)-eicosatetraenoate + reduced [NADPH--hemoprotein reductase] + O2 = (14R,15S)-epoxy-(5Z,8Z,11Z)-eicosatrienoate + oxidized [NADPH--hemoprotein reductase] + H2O + H(+). It catalyses the reaction (5Z,8Z,11Z,14Z)-eicosatetraenoate + reduced [NADPH--hemoprotein reductase] + O2 = (14S,15R)-epoxy-(5Z,8Z,11Z)-eicosatrienoate + oxidized [NADPH--hemoprotein reductase] + H2O + H(+). It carries out the reaction (5Z,8Z,11Z,14Z,17Z)-eicosapentaenoate + reduced [NADPH--hemoprotein reductase] + O2 = (17R,18S)-epoxy-(5Z,8Z,11Z,14Z)-eicosatetraenoate + oxidized [NADPH--hemoprotein reductase] + H2O + H(+). The enzyme catalyses (4Z,7Z,10Z,13Z,16Z,19Z)-docosahexaenoate + reduced [NADPH--hemoprotein reductase] + O2 = (19R,20S)-epoxy-(4Z,7Z,10Z,13Z,16Z)-docosapentaenoate + oxidized [NADPH--hemoprotein reductase] + H2O + H(+). The catalysed reaction is (5S)-hydroperoxy-(6E,8Z,11Z,14Z)-eicosatetraenoate = 5-oxo-(6E,8Z,11Z,14Z)-eicosatetraenoate + H2O. It catalyses the reaction (12S)-hydroperoxy-(5Z,8Z,10E,14Z)-eicosatetraenoate = 12-oxo-(5Z,8Z,10E,14Z)-eicosatetraenoate + H2O. It carries out the reaction (15S)-hydroperoxy-(5Z,8Z,11Z,13E)-eicosatetraenoate = 15-oxo-(5Z,8Z,11Z,13E)-eicosatetraenoate + H2O. The enzyme catalyses (13S)-hydroperoxy-(9Z,11E)-octadecadienoate = 13-oxo-(9Z,11E)-octadecadienoate + H2O. The catalysed reaction is (5Z,8Z,11Z,14Z)-eicosatetraenoate + reduced [NADPH--hemoprotein reductase] + O2 = 13-hydroxy-(5Z,8Z,11Z,14Z)-eicosatetraenoate + oxidized [NADPH--hemoprotein reductase] + H2O + H(+). It catalyses the reaction (5Z,8Z,11Z,14Z)-eicosatetraenoate + reduced [NADPH--hemoprotein reductase] + O2 = 19-hydroxy-(5Z,8Z,11Z,14Z)-eicosatetraenoate + oxidized [NADPH--hemoprotein reductase] + H2O + H(+). It carries out the reaction (9Z,12Z)-octadecadienoate + reduced [NADPH--hemoprotein reductase] + O2 = 11-hydroxy-(9Z,12Z)-octadecadienoate + oxidized [NADPH--hemoprotein reductase] + H2O + H(+). The protein operates within cofactor metabolism; retinol metabolism. It functions in the pathway steroid metabolism; cholesterol metabolism. Its pathway is lipid metabolism; arachidonate metabolism. Functionally, a cytochrome P450 monooxygenase involved in the metabolism of various endogenous substrates, including fatty acids, steroid hormones and vitamins. Mechanistically, uses molecular oxygen inserting one oxygen atom into a substrate, and reducing the second into a water molecule, with two electrons provided by NADPH via cytochrome P450 reductase (NADPH--hemoprotein reductase). Catalyzes the hydroxylation of carbon-hydrogen bonds. Exhibits high catalytic activity for the formation of hydroxyestrogens from estrone (E1) and 17beta-estradiol (E2), namely 2-hydroxy E1 and E2. Metabolizes cholesterol toward 25-hydroxycholesterol, a physiological regulator of cellular cholesterol homeostasis. May act as a major enzyme for all-trans retinoic acid biosynthesis in the liver. Catalyzes two successive oxidative transformation of all-trans retinol to all-trans retinal and then to the active form all-trans retinoic acid. Primarily catalyzes stereoselective epoxidation of the last double bond of polyunsaturated fatty acids (PUFA), displaying a strong preference for the (R,S) stereoisomer. Catalyzes bisallylic hydroxylation and omega-1 hydroxylation of PUFA. May also participate in eicosanoids metabolism by converting hydroperoxide species into oxo metabolites (lipoxygenase-like reaction, NADPH-independent). Plays a role in the oxidative metabolism of xenobiotics. Catalyzes the N-hydroxylation of heterocyclic amines and the O-deethylation of phenacetin. Metabolizes caffeine via N3-demethylation. The polypeptide is Cytochrome P450 1A2 (CYP1A2) (Callithrix jacchus (White-tufted-ear marmoset)).